The sequence spans 275 residues: Phosphate import ATP-binding protein PstB 3 (275 aa).

Residues 1–26 (MATQETDDSLISTDVQTDATERGDQP) are disordered. The span at 9–18 (SLISTDVQTD) shows a compositional bias: polar residues. The 240-residue stretch at 31-270 (VETKHLDVHY…PEDDRVEDYI (240 aa)) folds into the ABC transporter domain. 63–70 (GPSGCGKS) contacts ATP.

Belongs to the ABC transporter superfamily. Phosphate importer (TC 3.A.1.7) family. The complex is composed of two ATP-binding proteins (PstB), two transmembrane proteins (PstC and PstA) and a solute-binding protein (PstS).

Its subcellular location is the cell membrane. The catalysed reaction is phosphate(out) + ATP + H2O = ADP + 2 phosphate(in) + H(+). Its function is as follows. Part of the ABC transporter complex PstSACB involved in phosphate import. Responsible for energy coupling to the transport system. The protein is Phosphate import ATP-binding protein PstB 3 of Natronomonas pharaonis (strain ATCC 35678 / DSM 2160 / CIP 103997 / JCM 8858 / NBRC 14720 / NCIMB 2260 / Gabara) (Halobacterium pharaonis).